We begin with the raw amino-acid sequence, 584 residues long: DNA mismatch repair protein MutL (584 aa).

This sequence belongs to the DNA mismatch repair MutL/HexB family.

Functionally, this protein is involved in the repair of mismatches in DNA. It is required for dam-dependent methyl-directed DNA mismatch repair. May act as a 'molecular matchmaker', a protein that promotes the formation of a stable complex between two or more DNA-binding proteins in an ATP-dependent manner without itself being part of a final effector complex. In Buchnera aphidicola subsp. Acyrthosiphon pisum (strain 5A), this protein is DNA mismatch repair protein MutL.